Reading from the N-terminus, the 297-residue chain is ATP phosphoribosyltransferase (297 aa).

Belongs to the ATP phosphoribosyltransferase family.

The protein resides in the cytoplasm. It catalyses the reaction 1-(5-phospho-beta-D-ribosyl)-ATP + diphosphate = 5-phospho-alpha-D-ribose 1-diphosphate + ATP. It functions in the pathway amino-acid biosynthesis; L-histidine biosynthesis; L-histidine from 5-phospho-alpha-D-ribose 1-diphosphate: step 1/9. Its function is as follows. Catalyzes the condensation of ATP and 5-phosphoribose 1-diphosphate to form N'-(5'-phosphoribosyl)-ATP (PR-ATP). Has a crucial role in the pathway because the rate of histidine biosynthesis seems to be controlled primarily by regulation of the enzymatic activity. This chain is ATP phosphoribosyltransferase (HIS1), found in Kluyveromyces lactis (strain ATCC 8585 / CBS 2359 / DSM 70799 / NBRC 1267 / NRRL Y-1140 / WM37) (Yeast).